A 412-amino-acid polypeptide reads, in one-letter code: Adherens junction-associated protein 1 (412 aa).

A signal peptide spans Met-1–Ser-43. The Extracellular portion of the chain corresponds to Leu-44–Gln-284. 2 disordered regions span residues Leu-62 to Thr-175 and Asp-243 to Pro-271. Residues Pro-121 to Ala-146 show a composition bias toward low complexity. Residues His-160–Gly-171 are compositionally biased toward basic and acidic residues. The span at Thr-248–Ser-263 shows a compositional bias: low complexity. The chain crosses the membrane as a helical span at residues Ile-285 to Leu-305. The interval Leu-305–Cys-412 is targeting signals. At Lys-306–Cys-412 the chain is on the cytoplasmic side.

Forms a complex with CDH1 and CTNNB1; interacts directly with CTNNB1. Interacts with AP1M2 and isoform 2 of BSG/CD147.

The protein localises to the basolateral cell membrane. It localises to the apical cell membrane. The protein resides in the cell junction. Its subcellular location is the adherens junction. Plays a role in cell adhesion and cell migration. In Mus musculus (Mouse), this protein is Adherens junction-associated protein 1 (Ajap1).